A 69-amino-acid chain; its full sequence is Putative membrane protein insertion efficiency factor (69 aa).

This sequence belongs to the UPF0161 family.

It localises to the cell membrane. Functionally, could be involved in insertion of integral membrane proteins into the membrane. This chain is Putative membrane protein insertion efficiency factor, found in Clostridium botulinum (strain 657 / Type Ba4).